Consider the following 627-residue polypeptide: tRNA uridine 5-carboxymethylaminomethyl modification enzyme MnmG (627 aa).

FAD is bound by residues 13 to 18 (GGGHAG), V125, and S180. Residue 274-288 (GPRYCPSIEDKVVRF) participates in NAD(+) binding. Q371 serves as a coordination point for FAD.

This sequence belongs to the MnmG family. Homodimer. Heterotetramer of two MnmE and two MnmG subunits. Requires FAD as cofactor.

The protein resides in the cytoplasm. Its function is as follows. NAD-binding protein involved in the addition of a carboxymethylaminomethyl (cmnm) group at the wobble position (U34) of certain tRNAs, forming tRNA-cmnm(5)s(2)U34. This is tRNA uridine 5-carboxymethylaminomethyl modification enzyme MnmG from Francisella tularensis subsp. tularensis (strain WY96-3418).